The sequence spans 402 residues: Omega-3 fatty acid desaturase fat-1 (402 aa).

Transmembrane regions (helical) follow at residues 79–99, 101–121, 235–255, and 260–280; these read LVQD…FEYF, LFGY…LFVV, CVIS…IAGS, and FWYY…VTYL.

This sequence belongs to the fatty acid desaturase type 1 family.

It localises to the membrane. It carries out the reaction (9Z,12Z)-octadecadienoyl-CoA + 2 Fe(II)-[cytochrome b5] + O2 + 2 H(+) = (9Z,12Z,15Z)-octadecatrienoyl-CoA + 2 Fe(III)-[cytochrome b5] + 2 H2O. The enzyme catalyses (8Z,11Z,14Z)-eicosatrienoyl-CoA + 2 Fe(II)-[cytochrome b5] + O2 + 2 H(+) = (8Z,11Z,14Z,17Z)-eicosatetraenoyl-CoA + 2 Fe(III)-[cytochrome b5] + 2 H2O. It catalyses the reaction (5Z,8Z,11Z,14Z)-eicosatetraenoyl-CoA + 2 Fe(II)-[cytochrome b5] + O2 + 2 H(+) = (5Z,8Z,11Z,14Z,17Z)-eicosapentaenoyl-CoA + 2 Fe(III)-[cytochrome b5] + 2 H2O. The catalysed reaction is (7Z,10Z,13Z,16Z)-docosatetraenoyl-CoA + 2 Fe(II)-[cytochrome b5] + O2 + 2 H(+) = (7Z,10Z,13Z,16Z,19Z)-docosapentaenoyl-CoA + 2 Fe(III)-[cytochrome b5] + 2 H2O. It carries out the reaction (6Z,9Z,12Z)-octadecatrienoyl-CoA + 2 Fe(II)-[cytochrome b5] + O2 + 2 H(+) = (6Z,9Z,12Z,15Z)-octadecatetraenoyl-CoA + 2 Fe(III)-[cytochrome b5] + 2 H2O. It functions in the pathway lipid metabolism; polyunsaturated fatty acid biosynthesis. Omega-3 fatty acid desaturase that recognizes a range of 18- and 20-carbon omega-6 substrates. Introduces a double bond in the fatty acid chain three carbons away from terminal methyl group to biosynthesize n-3 (omega-3) polyunsaturated fatty acids (PUFAs) endogenously (PUFAs are essential for membrane structure and many cellular and physiological processes). Acts on a number of substrates like linoleoyl-CoA ((9Z,12Z)-octadecadienoyl-CoA, 18:2n-6), dihomo-gamma-linolenoyl-CoA ((8Z,11Z,14Z)-eicosatrienoyl-CoA, 20:3n-6), and arachidonoyl-CoA ((5Z,8Z,11Z,14Z)-eicosatetraenoyl-CoA, 20:4n-6), to generate alpha-linolenoyl-CoA ((9Z,12Z,15Z)-octadecatrienoyl-CoA, 18:3n-3), (8Z,11Z,14Z,17Z)-eicosatetraenoyl-CoA (20:4n-3) and (5Z,8Z,11Z,14Z,17Z)-eicosapentaenoyl-CoA (20:5n-3) respectively. Unlike plants, Caenorhabditis elegans desaturases seem to use fatty acyl-CoAs as substrates. This is Omega-3 fatty acid desaturase fat-1 (fat-1) from Caenorhabditis elegans.